The sequence spans 706 residues: Acyl-coenzyme A oxidase (706 aa).

Positions 682–706 (MLNRPSKEERERFEKSTETAKILSK) are disordered. The segment covering 686–699 (PSKEERERFEKSTE) has biased composition (basic and acidic residues).

This sequence belongs to the acyl-CoA oxidase family. Requires FAD as cofactor.

Its subcellular location is the peroxisome. It carries out the reaction a 2,3-saturated acyl-CoA + O2 = a (2E)-enoyl-CoA + H2O2. Its pathway is lipid metabolism; peroxisomal fatty acid beta-oxidation. The sequence is that of Acyl-coenzyme A oxidase (POX1) from Debaryomyces hansenii (strain ATCC 36239 / CBS 767 / BCRC 21394 / JCM 1990 / NBRC 0083 / IGC 2968) (Yeast).